The chain runs to 948 residues: Puromycin-sensitive aminopeptidase (948 aa).

Substrate contacts are provided by residues Glu206 and 341–345 (GAMEN). Residue His377 coordinates Zn(2+). Glu378 acts as the Proton acceptor in catalysis. Residues His381 and Glu400 each coordinate Zn(2+).

It belongs to the peptidase M1 family. Requires Zn(2+) as cofactor. As to expression, expressed mainly in intestinal cells in the posterior part of the intestine and in amphid sensory neurons and nerve ring neurons. Expressed in neurons in the male tail. Expressed in mature spermatids (at protein level).

The protein localises to the cytoplasm. Its subcellular location is the cell cortex. The protein resides in the chromosome. It is found in the cytoskeleton. It localises to the spindle pole. The enzyme catalyses Release of an N-terminal amino acid, preferentially alanine, from a wide range of peptides, amides and arylamides.. Inhibited by chelating agent 1,10-phenanthroline, aminopeptidase inhibitors actinonin, amastatin, and leuhistin, and to a lesser extent by puromycin. In terms of biological role, aminopeptidase. Required for the exit from meiosis, probably upstream of cyclin cyb-3. Involved in the establishment of the anterior-posterior polarity at the embryonic 1-cell stage by regulating the dynamics of sperm-donated centrosomes. Plays a role in oocyte maturation. Required for embryonic development. This chain is Puromycin-sensitive aminopeptidase, found in Caenorhabditis elegans.